The sequence spans 128 residues: Peptidyl-prolyl cis-trans isomerase NIMA-interacting 4 (128 aa).

Positions 1 to 34 are disordered; sequence MPPKGKGGKGAKGAAASGSGDSDKKEKAQKGGTA. Residues 32 to 126 form the PpiC domain; that stretch reads GTAVKVRHIL…FGYHIIMVEG (95 aa).

It belongs to the PpiC/parvulin rotamase family. PIN4 subfamily.

It localises to the nucleus. It is found in the nucleolus. The protein resides in the cytoplasm. The protein localises to the cytoskeleton. Its subcellular location is the spindle. The enzyme catalyses [protein]-peptidylproline (omega=180) = [protein]-peptidylproline (omega=0). Functionally, may be involved as a ribosomal RNA processing factor in ribosome biogenesis. Binds to DNA. In Danio rerio (Zebrafish), this protein is Peptidyl-prolyl cis-trans isomerase NIMA-interacting 4 (pin4).